The primary structure comprises 775 residues: Dipeptidyl peptidase 4 (775 aa).

The signal sequence occupies residues 1 to 15; it reads MKFLSLLLLAGIAQA. N-linked (GlcNAc...) asparagine glycans are attached at residues Asn-81, Asn-111, Asn-170, and Asn-219. Residues Ser-613, Asp-690, and His-725 each act as charge relay system in the active site.

Belongs to the peptidase S9B family.

Its subcellular location is the secreted. It catalyses the reaction Release of an N-terminal dipeptide, Xaa-Yaa-|-Zaa-, from a polypeptide, preferentially when Yaa is Pro, provided Zaa is neither Pro nor hydroxyproline.. Extracellular dipeptidyl-peptidase which removes N-terminal dipeptides sequentially from polypeptides having unsubstituted N-termini provided that the penultimate residue is proline. Contributes to pathogenicity. The protein is Dipeptidyl peptidase 4 (DPP4) of Trichophyton equinum (Horse ringworm fungus).